Reading from the N-terminus, the 2554-residue chain is DnaJ homolog subfamily C GRV2 (2554 aa).

Disordered regions lie at residues 746 to 766 (DVVD…KRLL) and 810 to 833 (QRRA…GVDS). Residues 815 to 825 (DSSSEASNPQA) show a composition bias toward polar residues. Coiled-coil stretches lie at residues 925 to 951 (TRQE…EDIS) and 1518 to 1546 (RTAS…LKRQ). The region spanning 1524-1606 (LNEEISNISK…AQCILYRRYG (83 aa)) is the J domain. 2 disordered regions span residues 1960 to 1994 (IEDR…SSEG) and 2339 to 2366 (SGEV…GQTP). The span at 1966–1977 (SNDTPELQSSVA) shows a compositional bias: polar residues. A compositionally biased stretch (basic and acidic residues) spans 1982–1994 (IEEHSDHQPSSEG). Residues 2352–2366 (VNESTDPSSLPGQTP) are compositionally biased toward polar residues.

As to expression, constitutively expressed in roots, hypocotyls, leaves (e.g. vascular tissues), stems, flowers (e.g. petals and stigmas), siliques and pollen.

Its subcellular location is the endosome membrane. Required for endosome formation, vacuolar protein sorting and determination of the embryo growth axis. Necessary for the transport of proteins into protein storage vacuoles (PSVs). Participates in vesicle trafficking from the endosome to the central vacuole. Involved in the regulation of shoot phototropism and gravitropism, probably through the positioning of specialized amyloplasts (statoliths) in endodermal cells. This is DnaJ homolog subfamily C GRV2 (GRV2) from Arabidopsis thaliana (Mouse-ear cress).